Consider the following 460-residue polypeptide: Probable lipid II flippase MurJ (460 aa).

A run of 11 helical transmembrane segments spans residues 4 to 24 (ILGAGVYSDIFFVAFKLPNLF), 50 to 70 (FASLVGLIFCGVLFMWCLLVA), 95 to 115 (IVAINFWYLLLVFITTFLGAL), 122 to 142 (FFASAYSASLLNLCMILALLI), 155 to 175 (LSYGVLLGGVAQILLHFYPLV), 228 to 248 (IASFLDTTIASFLASGSVSYL), 257 to 277 (LPLALFAIAISTALFPSIAIA), 292 to 312 (KAWFFLVGVLLLCSIGGIMLS), 336 to 356 (VFSLYLLGLLPFGLTKLFSLW), 366 to 386 (AAKISLISLFLGLAASLSLMP), and 428 to 448 (LVILFLACVEILLLLAFKSWV).

This sequence belongs to the MurJ/MviN family.

It localises to the cell inner membrane. It participates in cell wall biogenesis; peptidoglycan biosynthesis. In terms of biological role, involved in peptidoglycan biosynthesis. Transports lipid-linked peptidoglycan precursors from the inner to the outer leaflet of the cytoplasmic membrane. This Helicobacter pylori (strain J99 / ATCC 700824) (Campylobacter pylori J99) protein is Probable lipid II flippase MurJ.